A 282-amino-acid chain; its full sequence is Tumor necrosis factor ligand superfamily member 6 (282 aa).

Residues 1 to 82 (MQQPFNYPYP…KKKRDHNAGL (82 aa)) lie on the Cytoplasmic side of the membrane. Positions 30-73 (FPCPASVPGRPGQRRPPPPPPPPPPPPTLLPSRPLPPLPPPSLK) are disordered. Positions 43–71 (RRPPPPPPPPPPPPTLLPSRPLPPLPPPS) are enriched in pro residues. Residues 83–103 (CLLVMFFMVLVALVGLGLGMF) traverse the membrane as a helical; Signal-anchor for type II membrane protein segment. Topologically, residues 104–282 (QLFHLQKELT…SKTFFGLYKL (179 aa)) are extracellular. Residues 119 to 132 (ASQRHTESSLEKQI) show a composition bias toward basic and acidic residues. Residues 119–140 (ASQRHTESSLEKQIGHPNLPSE) are disordered. One can recognise a THD domain in the interval 146–282 (KVAHLTGKPN…SKTFFGLYKL (137 aa)). An N-linked (GlcNAc...) asparagine glycan is attached at asparagine 185. An intrachain disulfide couples cysteine 203 to cysteine 234. Asparagine 251 and asparagine 261 each carry an N-linked (GlcNAc...) asparagine glycan.

It belongs to the tumor necrosis factor family. As to quaternary structure, homotrimer. Interacts with ARHGAP9, BAIAP2L1, BTK, CACNB3, CACNB4, CRK, DLG2, DNMBP, DOCK4, EPS8L3, FGR, FYB1, FYN, HCK, ITK, ITSN2, KALRN, LYN, MACC1, MIA, MPP4, MYO15A, NCF1, NCK1, NCK2, NCKIPSD, OSTF1, PIK3R1, PSTPIP1, RIMBP3C, SAMSN1, SH3GL3, SH3PXD2B, SH3PXD2A, SH3RF2, SKAP2, SNX33, SNX9, SORBS3, SPTA1, SRC, SRGAP1, SRGAP2, SRGAP3, TEC, TJP3 and YES1. In terms of processing, the soluble form derives from the membrane form by proteolytic processing. The membrane-bound form undergoes two successive intramembrane proteolytic cleavages. The first one is processed by ADAM10 producing an N-terminal fragment, which lacks the receptor-binding extracellular domain. This ADAM10-processed FasL (FasL APL) remnant form is still membrane anchored and further processed by SPPL2A that liberates the FasL intracellular domain (FasL ICD). FasL shedding by ADAM10 is a prerequisite for subsequent intramembrane cleavage by SPPL2A in T-cells. Phosphorylated by FGR on tyrosine residues; this is required for ubiquitination and subsequent internalization. Post-translationally, N-glycosylated. Glycosylation enhances apoptotic activity. In terms of processing, monoubiquitinated.

Its subcellular location is the cell membrane. The protein localises to the cytoplasmic vesicle lumen. The protein resides in the lysosome lumen. It is found in the secreted. It localises to the nucleus. Its function is as follows. Cytokine that binds to TNFRSF6/FAS, a receptor that transduces the apoptotic signal into cells. Involved in cytotoxic T-cell-mediated apoptosis, natural killer cell-mediated apoptosis and in T-cell development. Initiates fratricidal/suicidal activation-induced cell death (AICD) in antigen-activated T-cells contributing to the termination of immune responses. TNFRSF6/FAS-mediated apoptosis also has a role in the induction of peripheral tolerance. Binds to TNFRSF6B/DcR3, a decoy receptor that blocks apoptosis. Induces FAS-mediated activation of NF-kappa-B, initiating non-apoptotic signaling pathways. Can induce apoptosis but does not appear to be essential for this process. In terms of biological role, cytoplasmic form induces gene transcription inhibition. The sequence is that of Tumor necrosis factor ligand superfamily member 6 (FASLG) from Sus scrofa (Pig).